The chain runs to 547 residues: CAP-Gly domain-containing linker protein 3 (547 aa).

The disordered stretch occupies residues 1-49; it reads MTKTDPAPMAPPPRGEEEEEEEEDEPVPEAPSPTQERRQKPVVHPSAPA. The segment covering 16 to 27 has biased composition (acidic residues); it reads EEEEEEEEDEPV. ANK repeat units follow at residues 117–158, 160–191, and 197–229; these read TDMT…LRSR, TNMN…VVNS, and NHGS…LRNR. Residues 314-356 form the CAP-Gly 1 domain; it reads GTTEFASGQWVGVELDEPEGKNDGSVGGVRYFICPPKQGLFAS. Residues 365-413 form a disordered region; sequence DAPPSSVTSTPRTPRMDFSRVTGKGRREHKGKKKSPSSPSLGSLQQREG. Over residues 367-377 the composition is skewed to low complexity; that stretch reads PPSSVTSTPRT. Position 374 is a phosphothreonine (T374). The segment covering 387-399 has biased composition (basic residues); that stretch reads GKGRREHKGKKKS. Residues S399 and S401 each carry the phosphoserine modification. Residues 436–478 enclose the CAP-Gly 2 domain; sequence GKTDFAPGYWYGIELDQPTGKHDGSVFGVRYFTCAPRHGVFAP. Residues 488-547 form a goLD region; the sequence is STDPPGDSVGAKKVHQVTMTQPKRTFTTVRTPKDIASENSISRLLFCCWFPWMLRAEMQS. Residues C534 and C535 are each lipidated (S-palmitoyl cysteine).

Homodimer. Interacts with AKT1 and AKT2; when AKT1 and AKT2 are phosphorylated and activated, affinity is higher for AKT2. Interacts with ZDHHC13 (via ANK repeats). Interacts with ZDHHC17 (via ANK repeats). Post-translationally, palmitoylation by ZDHHC17 regulates association with the plasma membrane.

It is found in the cell membrane. The protein resides in the cytoplasm. It localises to the golgi apparatus. Its subcellular location is the golgi stack. Functions as a cytoplasmic linker protein. Involved in TGN-endosome dynamics. May modulate the cellular compartmentalization of AKT kinase family and promote its cell membrane localization, thereby playing a role in glucose transport in adipocytes. The chain is CAP-Gly domain-containing linker protein 3 (Clip3) from Mus musculus (Mouse).